The following is a 310-amino-acid chain: AMMECR1-like protein (310 aa).

Residues 26–92 are disordered; sequence LSGSGTHSHG…SGALSPLPRP (67 aa). 2 stretches are compositionally biased toward polar residues: residues 28–66 and 74–84; these read GSGT…NVSD and SPITRMNTASG. Ser-74 carries the phosphoserine modification. In terms of domain architecture, AMMECR1 spans 97 to 291; that stretch reads NSTKNLVVTA…ISYAEYIASR (195 aa).

The polypeptide is AMMECR1-like protein (Ammecr1l) (Mus musculus (Mouse)).